The following is a 280-amino-acid chain: Dexamethasone-induced Ras-related protein 1 (280 aa).

S-nitrosocysteine is present on Cys-11. GTP is bound at residue 31-38 (GSSKVGKT). The short motif at 53-61 (YTPTIEDFH) is the Effector region element. GTP-binding positions include 78 to 82 (DTSGN) and 145 to 148 (NKGD). Cys-277 is subject to Cysteine methyl ester. A lipid anchor (S-farnesyl cysteine) is attached at Cys-277. A propeptide spans 278–280 (VIS) (removed in mature form).

It belongs to the small GTPase superfamily. RasD family. Component of a complex, at least composed of APBB1, RASD1/DEXRAS1 and APP. Interacts with APBB1/FE65. Forms a ternary complex with CAPON and NOS1. Post-translationally, S-nitrosylation stimulates guanine-nucleotide exchange activity. In terms of tissue distribution, expressed in brain, heart, kidney and liver.

It localises to the cell membrane. It is found in the cytoplasm. The protein localises to the perinuclear region. Its subcellular location is the nucleus. Its function is as follows. Small GTPase. Negatively regulates the transcription regulation activity of the APBB1/FE65-APP complex via its interaction with APBB1/FE65. This is Dexamethasone-induced Ras-related protein 1 (Rasd1) from Mus musculus (Mouse).